The chain runs to 257 residues: Snake venom serine protease KN8 (257 aa).

The N-terminal stretch at 1–18 (MVLIRVLANLLILQLSYA) is a signal peptide. The propeptide occupies 19 to 24 (QKSSEL). The Peptidase S1 domain occupies 25 to 248 (VVGGLPCNIN…HLDWIKSIIA (224 aa)). 5 disulfides stabilise this stretch: Cys31–Cys162, Cys49–Cys65, Cys141–Cys209, Cys173–Cys188, and Cys199–Cys224. His64 serves as the catalytic Charge relay system. Asn102 carries an N-linked (GlcNAc...) asparagine glycan. Asp109 functions as the Charge relay system in the catalytic mechanism. Asn120 and Asn121 each carry an N-linked (GlcNAc...) asparagine glycan. The active-site Charge relay system is the Ser203.

Belongs to the peptidase S1 family. Snake venom subfamily. In terms of assembly, monomer. As to expression, expressed by the venom gland.

The protein resides in the secreted. Functionally, snake venom serine protease that may act in the hemostasis system of the prey. This chain is Snake venom serine protease KN8, found in Trimeresurus stejnegeri (Chinese green tree viper).